Reading from the N-terminus, the 342-residue chain is Flavanone 3-dioxygenase 2 (342 aa).

The Fe2OG dioxygenase domain maps to 193 to 293 (QEQHMAVNYY…RMSVASFLCP (101 aa)). Residues His-217, Asp-219, and His-274 each contribute to the Fe cation site. Arg-284 lines the 2-oxoglutarate pocket.

This sequence belongs to the iron/ascorbate-dependent oxidoreductase family. Requires Fe(2+) as cofactor. It depends on L-ascorbate as a cofactor. Expressed in roots, leaves and stems. Expressed at low levels in seeds.

The catalysed reaction is a (2S)-flavan-4-one + 2-oxoglutarate + O2 = a (2R,3R)-dihydroflavonol + succinate + CO2. It functions in the pathway secondary metabolite biosynthesis; flavonoid biosynthesis. In terms of biological role, catalyzes the 3-beta-hydroxylation of 2S-flavanones to 2R,3R-dihydroflavonols which are intermediates in the biosynthesis of flavonols, anthocyanidins, catechins and proanthocyanidins in plants. Converts (2S)-eriodictyol to (+)-taxifolin and (2S)-naringenin to (+)-(2R/3R)-dihydrokaempferol in vitro. The polypeptide is Flavanone 3-dioxygenase 2 (Oryza sativa subsp. japonica (Rice)).